Reading from the N-terminus, the 183-residue chain is Transcription termination/antitermination protein NusG (183 aa).

The KOW domain maps to 131–161 (PGEEVRVTEGPFADFNGTVEEVDYEKGRLKV).

The protein belongs to the NusG family.

Its function is as follows. Participates in transcription elongation, termination and antitermination. This Pasteurella multocida (strain Pm70) protein is Transcription termination/antitermination protein NusG.